Consider the following 284-residue polypeptide: Zinc finger protein ZAT3 (284 aa).

Residues 1 to 12 (MNNNHSYDDRSF) show a composition bias toward basic and acidic residues. Residues 1 to 76 (MNNNHSYDDR…KPDPNAPKIT (76 aa)) form a disordered region. Residues 18–37 (PSNTSNPNPNLQFALSSSYD) are compositionally biased toward polar residues. Residues 47-62 (TVASSSSSSPKSASKP) show a composition bias toward low complexity. 3 consecutive C2H2-type zinc fingers follow at residues 77–99 (RPCT…MRCH), 162–184 (FECG…RASH), and 222–244 (HKCN…MRCH).

As to quaternary structure, interacts (via the EAR motif) with TPL. As to expression, expressed exclusively in pollen.

It localises to the nucleus. Mediates the regulation of male germ cell division by DUO1. This chain is Zinc finger protein ZAT3, found in Arabidopsis thaliana (Mouse-ear cress).